Here is a 1410-residue protein sequence, read N- to C-terminus: non-specific serine/threonine protein kinase (1410 aa).

The 273-residue stretch at 27 to 299 (THYVSQLNNS…LLEKYRTIYF (273 aa)) folds into the Protein kinase domain. Residues 33 to 41 (LNNSRFLKT) and Lys54 contribute to the ATP site. The active-site Proton acceptor is the Asp147. HEAT repeat units follow at residues 441–478 (TKLD…EVKH), 485–525 (NIFV…KANL), 556–594 (RKLQ…YFGR), 596–633 (KTND…LLGP), and 635–672 (TMEQ…TRFV). WD repeat units follow at residues 1037-1076 (FDGT…NEKS), 1187-1226 (ADYG…QIRA), and 1230-1273 (GESL…CKHV).

It belongs to the protein kinase superfamily. Ser/Thr protein kinase family. Component of the autophagy-specific VPS34 PI3-kinase complex I composed of VPS15, VPS30, VPS34, ATG14 and ATG38; and of the VPS34 PI3-kinase complex II composed of VPS15, VPS30, VPS34 and VPS38. In terms of processing, autophosphorylated.

It is found in the golgi apparatus. The protein resides in the trans-Golgi network membrane. The protein localises to the endosome membrane. It catalyses the reaction L-seryl-[protein] + ATP = O-phospho-L-seryl-[protein] + ADP + H(+). The catalysed reaction is L-threonyl-[protein] + ATP = O-phospho-L-threonyl-[protein] + ADP + H(+). Serine/threonine-protein kinase that plays a role in signaling in modulation of host immune response, intracellular survival and virulence. Required for impediment of phagosomal maturation in THP-1 macrophages. Regulatory subunit of the autophagy-specific VPS34 PI3-kinase complex I essential to recruit the ATG8-phosphatidylinositol conjugate and the ATG12-ATG5 conjugate to the pre-autophagosomal structure. Within the PS34 PI3-kinase complex I, VPS15-mediated phosphorylation of VPS34 may be required for recruiting VPS34 to the membrane but not for activation of its PI3K activity. Is also involved in endosome-to-Golgi retrograde transport as part of the VPS34 PI3-kinase complex II. This second complex is required for the endosome-to-Golgi retrieval of PEP1 and KEX2, and the recruitment of VPS5 and VPS7, two components of the retromer complex, to endosomal membranes (probably through the synthesis of a specific pool of phosphatidylinositol 3-phosphate recruiting the retromer to the endosomes). By regulating VPS34 kinase activity, VPS15 appears to be essential for the efficient delivery of soluble hydrolases to the yeast vacuole. The polypeptide is non-specific serine/threonine protein kinase (Candida glabrata (strain ATCC 2001 / BCRC 20586 / JCM 3761 / NBRC 0622 / NRRL Y-65 / CBS 138) (Yeast)).